Consider the following 457-residue polypeptide: Bifunctional protein GlmU (457 aa).

The tract at residues 1–230 (MSKRYAVVLA…FEESLGVNDR (230 aa)) is pyrophosphorylase. UDP-N-acetyl-alpha-D-glucosamine is bound by residues 9–12 (LAAG), K23, Q73, and 78–79 (GT). D103 lines the Mg(2+) pocket. UDP-N-acetyl-alpha-D-glucosamine contacts are provided by G140, E155, N170, and N228. N228 contributes to the Mg(2+) binding site. Positions 231–251 (IALAEASKLMQRRINENHMRN) are linker. Residues 252 to 457 (GVTLVNPENT…GYAKHLNHGK (206 aa)) form an N-acetyltransferase region. 2 residues coordinate UDP-N-acetyl-alpha-D-glucosamine: R333 and K351. Residue H363 is the Proton acceptor of the active site. Residues Y366 and N377 each contribute to the UDP-N-acetyl-alpha-D-glucosamine site. Acetyl-CoA-binding positions include 386 to 387 (NY), A423, and R440.

It in the N-terminal section; belongs to the N-acetylglucosamine-1-phosphate uridyltransferase family. The protein in the C-terminal section; belongs to the transferase hexapeptide repeat family. As to quaternary structure, homotrimer. The cofactor is Mg(2+).

The protein localises to the cytoplasm. It carries out the reaction alpha-D-glucosamine 1-phosphate + acetyl-CoA = N-acetyl-alpha-D-glucosamine 1-phosphate + CoA + H(+). It catalyses the reaction N-acetyl-alpha-D-glucosamine 1-phosphate + UTP + H(+) = UDP-N-acetyl-alpha-D-glucosamine + diphosphate. Its pathway is nucleotide-sugar biosynthesis; UDP-N-acetyl-alpha-D-glucosamine biosynthesis; N-acetyl-alpha-D-glucosamine 1-phosphate from alpha-D-glucosamine 6-phosphate (route II): step 2/2. It functions in the pathway nucleotide-sugar biosynthesis; UDP-N-acetyl-alpha-D-glucosamine biosynthesis; UDP-N-acetyl-alpha-D-glucosamine from N-acetyl-alpha-D-glucosamine 1-phosphate: step 1/1. It participates in bacterial outer membrane biogenesis; LPS lipid A biosynthesis. Its function is as follows. Catalyzes the last two sequential reactions in the de novo biosynthetic pathway for UDP-N-acetylglucosamine (UDP-GlcNAc). The C-terminal domain catalyzes the transfer of acetyl group from acetyl coenzyme A to glucosamine-1-phosphate (GlcN-1-P) to produce N-acetylglucosamine-1-phosphate (GlcNAc-1-P), which is converted into UDP-GlcNAc by the transfer of uridine 5-monophosphate (from uridine 5-triphosphate), a reaction catalyzed by the N-terminal domain. The polypeptide is Bifunctional protein GlmU (Listeria innocua serovar 6a (strain ATCC BAA-680 / CLIP 11262)).